The chain runs to 157 residues: 6,7-dimethyl-8-ribityllumazine synthase (157 aa).

Residues W27, A59–E61, and V81–I83 contribute to the 5-amino-6-(D-ribitylamino)uracil site. (2S)-2-hydroxy-3-oxobutyl phosphate is bound at residue E86–T87. H89 functions as the Proton donor in the catalytic mechanism. Residue N114 coordinates 5-amino-6-(D-ribitylamino)uracil. R128 is a binding site for (2S)-2-hydroxy-3-oxobutyl phosphate.

The protein belongs to the DMRL synthase family. In terms of assembly, homopentamer.

The enzyme catalyses (2S)-2-hydroxy-3-oxobutyl phosphate + 5-amino-6-(D-ribitylamino)uracil = 6,7-dimethyl-8-(1-D-ribityl)lumazine + phosphate + 2 H2O + H(+). The protein operates within cofactor biosynthesis; riboflavin biosynthesis; riboflavin from 2-hydroxy-3-oxobutyl phosphate and 5-amino-6-(D-ribitylamino)uracil: step 1/2. Its function is as follows. Catalyzes the formation of 6,7-dimethyl-8-ribityllumazine by condensation of 5-amino-6-(D-ribitylamino)uracil with 3,4-dihydroxy-2-butanone 4-phosphate. This is the penultimate step in the biosynthesis of riboflavin. This chain is 6,7-dimethyl-8-ribityllumazine synthase, found in Mycolicibacterium vanbaalenii (strain DSM 7251 / JCM 13017 / BCRC 16820 / KCTC 9966 / NRRL B-24157 / PYR-1) (Mycobacterium vanbaalenii).